The sequence spans 34 residues: Photosystem II reaction center protein M (34 aa).

The helical transmembrane segment at 7-27 (GFVASLMFILVPAIFLIVLYI) threads the bilayer.

Belongs to the PsbM family. In terms of assembly, PSII is composed of 1 copy each of membrane proteins PsbA, PsbB, PsbC, PsbD, PsbE, PsbF, PsbH, PsbI, PsbJ, PsbK, PsbL, PsbM, PsbT, PsbX, PsbY, PsbZ, Psb30/Ycf12, peripheral proteins PsbO, CyanoQ (PsbQ), PsbU, PsbV and a large number of cofactors. It forms dimeric complexes.

The protein resides in the cellular thylakoid membrane. Functionally, one of the components of the core complex of photosystem II (PSII). PSII is a light-driven water:plastoquinone oxidoreductase that uses light energy to abstract electrons from H(2)O, generating O(2) and a proton gradient subsequently used for ATP formation. It consists of a core antenna complex that captures photons, and an electron transfer chain that converts photonic excitation into a charge separation. This subunit is found at the monomer-monomer interface. This Synechococcus sp. (strain CC9902) protein is Photosystem II reaction center protein M.